The chain runs to 242 residues: Interleukin-34 (242 aa).

The N-terminal stretch at 1–20 (MPRGFTWLRYLGIFLGVALG) is a signal peptide. The N-linked (GlcNAc...) asparagine glycan is linked to asparagine 76. The segment at 210–242 (TQLYPPPPWSPSSPPHSTGSVRPVRAQGEGLLP) is disordered. The segment covering 213–223 (YPPPPWSPSSP) has biased composition (pro residues).

It belongs to the IL-34 family. As to quaternary structure, homodimer. Interacts with CSF1R. In terms of tissue distribution, detected in the sinusoidal epithelium in the red pulp of spleen (at protein level). Predominantly expressed in spleen. Also detected in a range of other tissues including heart, brain, lung, liver, kidney, thymus, testis, ovary, small intestine, prostate and colon.

The protein resides in the secreted. Functionally, cytokine that promotes the proliferation, survival and differentiation of monocytes and macrophages. Promotes the release of pro-inflammatory chemokines, and thereby plays an important role in innate immunity and in inflammatory processes. Plays an important role in the regulation of osteoclast proliferation and differentiation, and in the regulation of bone resorption. Signaling via CSF1R and its downstream effectors stimulates phosphorylation of MAPK1/ERK2 AND MAPK3/ERK1. The polypeptide is Interleukin-34 (IL34) (Homo sapiens (Human)).